A 399-amino-acid chain; its full sequence is Succinate--CoA ligase [ADP-forming] subunit beta (399 aa).

In terms of domain architecture, ATP-grasp spans 9–254; that stretch reads KAVLAEFGAP…ESEEDPKEIE (246 aa). ATP-binding positions include K46, 53–55, E109, A112, and E117; that span reads GRG. Residues N209 and D223 each contribute to the Mg(2+) site. Residues N274 and 331 to 333 contribute to the substrate site; that span reads GIM.

Belongs to the succinate/malate CoA ligase beta subunit family. Heterotetramer of two alpha and two beta subunits. Mg(2+) is required as a cofactor.

It carries out the reaction succinate + ATP + CoA = succinyl-CoA + ADP + phosphate. The catalysed reaction is GTP + succinate + CoA = succinyl-CoA + GDP + phosphate. The protein operates within carbohydrate metabolism; tricarboxylic acid cycle; succinate from succinyl-CoA (ligase route): step 1/1. In terms of biological role, succinyl-CoA synthetase functions in the citric acid cycle (TCA), coupling the hydrolysis of succinyl-CoA to the synthesis of either ATP or GTP and thus represents the only step of substrate-level phosphorylation in the TCA. The beta subunit provides nucleotide specificity of the enzyme and binds the substrate succinate, while the binding sites for coenzyme A and phosphate are found in the alpha subunit. The chain is Succinate--CoA ligase [ADP-forming] subunit beta from Caulobacter vibrioides (strain NA1000 / CB15N) (Caulobacter crescentus).